Here is a 319-residue protein sequence, read N- to C-terminus: Mitochondrial fission regulator 1-like (319 aa).

The interval 1-35 (MASLGAGAEPESVLFGKDGTEACESPEGRRSGRRK) is disordered.

This sequence belongs to the MTFR1 family.

Its subcellular location is the mitochondrion outer membrane. Mitochondrial protein required for adaptation of miochondrial dynamics to metabolic changes. Regulates mitochondrial morphology at steady state and mediates AMPK-dependent stress-induced mitochondrial fragmentation via the control of OPA1 levels. In Xenopus tropicalis (Western clawed frog), this protein is Mitochondrial fission regulator 1-like (mtfr1l).